A 305-amino-acid polypeptide reads, in one-letter code: Ribonuclease BN (305 aa).

Zn(2+) is bound by residues histidine 64, histidine 66, aspartate 68, histidine 69, histidine 141, aspartate 212, and histidine 270. Residue aspartate 68 is the Proton acceptor of the active site.

It belongs to the RNase Z family. RNase BN subfamily. Homodimer. It depends on Zn(2+) as a cofactor.

Its function is as follows. Zinc phosphodiesterase, which has both exoribonuclease and endoribonuclease activities. The protein is Ribonuclease BN of Shigella boydii serotype 18 (strain CDC 3083-94 / BS512).